The sequence spans 96 residues: Small ribosomal subunit protein bS6 (96 aa).

It belongs to the bacterial ribosomal protein bS6 family.

Its function is as follows. Binds together with bS18 to 16S ribosomal RNA. The protein is Small ribosomal subunit protein bS6 of Thermobifida fusca (strain YX).